The sequence spans 154 residues: Large ribosomal subunit protein uL13 (154 aa).

The protein belongs to the universal ribosomal protein uL13 family. As to quaternary structure, part of the 50S ribosomal subunit.

Its function is as follows. This protein is one of the early assembly proteins of the 50S ribosomal subunit, although it is not seen to bind rRNA by itself. It is important during the early stages of 50S assembly. This chain is Large ribosomal subunit protein uL13, found in Brucella suis (strain ATCC 23445 / NCTC 10510).